The sequence spans 876 residues: Alanine--tRNA ligase (876 aa).

Residues histidine 568, histidine 572, cysteine 669, and histidine 673 each coordinate Zn(2+).

It belongs to the class-II aminoacyl-tRNA synthetase family. Zn(2+) is required as a cofactor.

Its subcellular location is the cytoplasm. It catalyses the reaction tRNA(Ala) + L-alanine + ATP = L-alanyl-tRNA(Ala) + AMP + diphosphate. Functionally, catalyzes the attachment of alanine to tRNA(Ala) in a two-step reaction: alanine is first activated by ATP to form Ala-AMP and then transferred to the acceptor end of tRNA(Ala). Also edits incorrectly charged Ser-tRNA(Ala) and Gly-tRNA(Ala) via its editing domain. The polypeptide is Alanine--tRNA ligase (Sulfurihydrogenibium sp. (strain YO3AOP1)).